Reading from the N-terminus, the 201-residue chain is Large ribosomal subunit protein eL15 (201 aa).

The protein belongs to the eukaryotic ribosomal protein eL15 family.

The protein is Large ribosomal subunit protein eL15 (RPL15) of Quercus suber (Cork oak).